We begin with the raw amino-acid sequence, 117 residues long: Non-specific lipid-transfer protein 2B (117 aa).

Positions 1–25 (MARAQLVLVALVAALLLAGPHTTMA) are cleaved as a signal peptide. 4 disulfides stabilise this stretch: cysteine 29–cysteine 76, cysteine 39–cysteine 53, cysteine 54–cysteine 99, and cysteine 74–cysteine 113.

Belongs to the plant LTP family. Expressed in roots, mesocotyls and developing leaves.

Functionally, plant non-specific lipid-transfer proteins transfer phospholipids as well as galactolipids across membranes. May play a role in wax or cutin deposition in the cell walls of expanding epidermal cells and certain secretory tissues. This chain is Non-specific lipid-transfer protein 2B (LTP2-B), found in Oryza sativa subsp. japonica (Rice).